A 173-amino-acid polypeptide reads, in one-letter code: Thaumatin-like protein PWIR2 (173 aa).

A signal peptide spans 1-20 (MATSPVLFLLLAVFAAGASA).

This sequence belongs to the thaumatin family.

The polypeptide is Thaumatin-like protein PWIR2 (Triticum aestivum (Wheat)).